A 165-amino-acid chain; its full sequence is Protein NKG7 (165 aa).

4 consecutive transmembrane segments (helical) span residues 9 to 29 (LFAG…DFWI), 61 to 81 (FCIL…LSCI), 92 to 112 (LVST…MAVY), and 133 to 153 (FYLG…SLGA).

Belongs to the PMP-22/EMP/MP20 family. Predominantly expressed by leukocytes with cytotoxic activity such as CD8(+) T-cells and natural killer cells.

It is found in the cell membrane. The protein localises to the cytolytic granule membrane. Regulates cytotoxic granule exocytosis in effector lymphocytes, thus acting as a critical mediator of inflammation in a broad range of infectious and non-infectious diseases. Essential for cytotoxic degranulation of natural killer (NK) cells and CD8(+) T-cells and for the activation of CD4(+) T-cells following infection. Plays a critical role in CD8(+) T-cell and NK cell-mediated cytolysis of target cells and contributes to the cytolytic activity via the perforin/granzyme pathway by enhancing exocytosis of LAMP1-carrying lytic granules. Contributes to NK cell-mediated control of cancer metastasis. The chain is Protein NKG7 (Nkg7) from Mus musculus (Mouse).